The sequence spans 355 residues: tRNA-specific 2-thiouridylase MnmA (355 aa).

ATP-binding positions include 8–15 (GMSGGVDS) and methionine 34. Catalysis depends on cysteine 103, which acts as the Nucleophile. Cysteine 103 and cysteine 199 form a disulfide bridge. Glycine 127 is an ATP binding site. An interaction with tRNA region spans residues 149–151 (KDQ). The Cysteine persulfide intermediate role is filled by cysteine 199. The interaction with tRNA stretch occupies residues 305-306 (RY).

It belongs to the MnmA/TRMU family.

It localises to the cytoplasm. It catalyses the reaction S-sulfanyl-L-cysteinyl-[protein] + uridine(34) in tRNA + AH2 + ATP = 2-thiouridine(34) in tRNA + L-cysteinyl-[protein] + A + AMP + diphosphate + H(+). Its function is as follows. Catalyzes the 2-thiolation of uridine at the wobble position (U34) of tRNA, leading to the formation of s(2)U34. This Clostridium acetobutylicum (strain ATCC 824 / DSM 792 / JCM 1419 / IAM 19013 / LMG 5710 / NBRC 13948 / NRRL B-527 / VKM B-1787 / 2291 / W) protein is tRNA-specific 2-thiouridylase MnmA.